Reading from the N-terminus, the 89-residue chain is Small ribosomal subunit protein uS15 (89 aa).

Positions 1–22 are disordered; that stretch reads MALEKEEKSQIINNYQLHETDT. A compositionally biased stretch (polar residues) spans 10–22; it reads QIINNYQLHETDT.

It belongs to the universal ribosomal protein uS15 family. As to quaternary structure, part of the 30S ribosomal subunit. Forms a bridge to the 50S subunit in the 70S ribosome, contacting the 23S rRNA.

Its function is as follows. One of the primary rRNA binding proteins, it binds directly to 16S rRNA where it helps nucleate assembly of the platform of the 30S subunit by binding and bridging several RNA helices of the 16S rRNA. Forms an intersubunit bridge (bridge B4) with the 23S rRNA of the 50S subunit in the ribosome. The polypeptide is Small ribosomal subunit protein uS15 (Chloroflexus aggregans (strain MD-66 / DSM 9485)).